Here is a 259-residue protein sequence, read N- to C-terminus: UPF0246 protein RD1_0358 (259 aa).

It belongs to the UPF0246 family.

In Roseobacter denitrificans (strain ATCC 33942 / OCh 114) (Erythrobacter sp. (strain OCh 114)), this protein is UPF0246 protein RD1_0358.